Consider the following 236-residue polypeptide: Phosphoglycolate phosphatase (236 aa).

Residue aspartate 14 is the Nucleophile of the active site. Mg(2+) is bound by residues aspartate 14, aspartate 16, and aspartate 177.

It belongs to the HAD-like hydrolase superfamily. CbbY/CbbZ/Gph/YieH family. Requires Mg(2+) as cofactor.

The enzyme catalyses 2-phosphoglycolate + H2O = glycolate + phosphate. The protein operates within organic acid metabolism; glycolate biosynthesis; glycolate from 2-phosphoglycolate: step 1/1. Specifically catalyzes the dephosphorylation of 2-phosphoglycolate. Is involved in the dissimilation of the intracellular 2-phosphoglycolate formed during the DNA repair of 3'-phosphoglycolate ends, a major class of DNA lesions induced by oxidative stress. In Neisseria gonorrhoeae (strain ATCC 700825 / FA 1090), this protein is Phosphoglycolate phosphatase.